Reading from the N-terminus, the 169-residue chain is Secreted RxLR effector protein BLN03 (169 aa).

The N-terminal stretch at Met1–Ala21 is a signal peptide. Residues Thr51–Arg54 carry the dEER motif. Residues Gly149–Val169 traverse the membrane as a helical segment.

The protein belongs to the RxLR effector family. As to quaternary structure, interacts with host transcription factor NAC069.

It is found in the secreted. The protein localises to the host membrane. Functionally, secreted effector that inhibits stress-induced relocalization of the endoplasmic reticulum tail-anchored transcription factors to the nucleus, thus affecting stress responses. This chain is Secreted RxLR effector protein BLN03, found in Bremia lactucae (Lettuce downy mildew).